The following is an 858-amino-acid chain: Leucine--tRNA ligase (858 aa).

Positions 42 to 52 match the 'HIGH' region motif; it reads PYPSGRLHMGH. A 'KMSKS' region motif is present at residues 618–622; it reads KMSKS. K621 serves as a coordination point for ATP.

It belongs to the class-I aminoacyl-tRNA synthetase family.

Its subcellular location is the cytoplasm. The enzyme catalyses tRNA(Leu) + L-leucine + ATP = L-leucyl-tRNA(Leu) + AMP + diphosphate. The polypeptide is Leucine--tRNA ligase (Aliivibrio salmonicida (strain LFI1238) (Vibrio salmonicida (strain LFI1238))).